We begin with the raw amino-acid sequence, 293 residues long: Pantothenate synthetase (293 aa).

Position 30–37 (30–37 (MGYLHKGH)) interacts with ATP. Residue histidine 37 is the Proton donor of the active site. Glutamine 61 serves as a coordination point for (R)-pantoate. Glutamine 61 provides a ligand contact to beta-alanine. 147–150 (GEKD) is an ATP binding site. Residue glutamine 153 participates in (R)-pantoate binding. ATP contacts are provided by residues valine 176 and 184–187 (CSSR).

This sequence belongs to the pantothenate synthetase family. As to quaternary structure, homodimer.

Its subcellular location is the cytoplasm. It carries out the reaction (R)-pantoate + beta-alanine + ATP = (R)-pantothenate + AMP + diphosphate + H(+). Its pathway is cofactor biosynthesis; (R)-pantothenate biosynthesis; (R)-pantothenate from (R)-pantoate and beta-alanine: step 1/1. Its function is as follows. Catalyzes the condensation of pantoate with beta-alanine in an ATP-dependent reaction via a pantoyl-adenylate intermediate. This is Pantothenate synthetase from Brucella melitensis biotype 2 (strain ATCC 23457).